A 568-amino-acid polypeptide reads, in one-letter code: 3-(3-hydroxy-phenyl)propionate/3-hydroxycinnamic acid hydroxylase (568 aa).

FAD is bound by residues 13–42 (DVVI…IVEE) and 278–288 (FRKGRMFLAGD).

Belongs to the PheA/TfdB FAD monooxygenase family. FAD is required as a cofactor.

The catalysed reaction is 3-(3-hydroxyphenyl)propanoate + NADH + O2 + H(+) = 3-(2,3-dihydroxyphenyl)propanoate + NAD(+) + H2O. It catalyses the reaction (2E)-3-(3-hydroxyphenyl)prop-2-enoate + NADH + O2 + H(+) = (2E)-3-(2,3-dihydroxyphenyl)prop-2-enoate + NAD(+) + H2O. It functions in the pathway aromatic compound metabolism; 3-phenylpropanoate degradation. Functionally, catalyzes the insertion of one atom of molecular oxygen into position 2 of the phenyl ring of 3-(3-hydroxyphenyl)propionate (3-HPP) and hydroxycinnamic acid (3HCI). The protein is 3-(3-hydroxy-phenyl)propionate/3-hydroxycinnamic acid hydroxylase of Mycobacterium sp. (strain JLS).